The following is a 430-amino-acid chain: MFETFVNFFKTKEVRNKIFFTLAMLVIFKIGTYIPAPGVNPAAFDNNQGSQGVTDLLNTFGGGALKNFSIFAMGIMPYITASIVMQLLQMDIVPKFTEWAKQGDVGRKKLNNVTRYFAIILAFIQSIGMAFQFNNYLKGALIIDPSPMSYLLIAIVLTTGTAFLLWLGEQITQYGVGNGISIIIFAGILSTLPSSLIQFYQQAFVGQSDTTMAWLQVAGLVIGLVLLTMGAVYVLQAVRKIPIQYAKKQSTQRLGSNATYLPLKVNSAGVIPVIFAMAFFLLPRTLTMFFPKADWAQQIANTANPSSNIGMVIYIILIIAFTYFYAFVQVNPEKMSDNLKKQGSYVPGIRPGEQTKKYITKVLYRLTFVGSIFLAVIAILPILATKFMNLPQSIQVGGTSLLIVIGVAIETMKSLEAQVNQKEYKGFGGR.

10 helical membrane passes run 18–38 (IFFT…PAPG), 68–88 (FSIF…MQLL), 117–137 (FAII…NNYL), 148–168 (MSYL…LWLG), 179–199 (GISI…LIQF), 215–235 (LQVA…VYVL), 270–290 (VIPV…TMFF), 308–328 (NIGM…YAFV), 368–388 (FVGS…TKFM), and 390–410 (LPQS…VAIE).

The protein belongs to the SecY/SEC61-alpha family. In terms of assembly, component of the Sec protein translocase complex. Heterotrimer consisting of SecY, SecE and SecG subunits. The heterotrimers can form oligomers, although 1 heterotrimer is thought to be able to translocate proteins. Interacts with the ribosome. Interacts with SecDF, and other proteins may be involved. Interacts with SecA.

Its subcellular location is the cell membrane. The central subunit of the protein translocation channel SecYEG. Consists of two halves formed by TMs 1-5 and 6-10. These two domains form a lateral gate at the front which open onto the bilayer between TMs 2 and 7, and are clamped together by SecE at the back. The channel is closed by both a pore ring composed of hydrophobic SecY resides and a short helix (helix 2A) on the extracellular side of the membrane which forms a plug. The plug probably moves laterally to allow the channel to open. The ring and the pore may move independently. In Staphylococcus carnosus (strain TM300), this protein is Protein translocase subunit SecY.